The following is a 617-amino-acid chain: 1-deoxy-D-xylulose-5-phosphate synthase (617 aa).

Residues H76 and 117–119 contribute to the thiamine diphosphate site; that span reads GHS. D148 serves as a coordination point for Mg(2+). Residues 149–150, N177, Y285, and E366 contribute to the thiamine diphosphate site; that span reads GA. Residue N177 coordinates Mg(2+).

This sequence belongs to the transketolase family. DXPS subfamily. Homodimer. Mg(2+) is required as a cofactor. Requires thiamine diphosphate as cofactor.

The catalysed reaction is D-glyceraldehyde 3-phosphate + pyruvate + H(+) = 1-deoxy-D-xylulose 5-phosphate + CO2. It participates in metabolic intermediate biosynthesis; 1-deoxy-D-xylulose 5-phosphate biosynthesis; 1-deoxy-D-xylulose 5-phosphate from D-glyceraldehyde 3-phosphate and pyruvate: step 1/1. In terms of biological role, catalyzes the acyloin condensation reaction between C atoms 2 and 3 of pyruvate and glyceraldehyde 3-phosphate to yield 1-deoxy-D-xylulose-5-phosphate (DXP). The protein is 1-deoxy-D-xylulose-5-phosphate synthase of Mannheimia succiniciproducens (strain KCTC 0769BP / MBEL55E).